The primary structure comprises 235 residues: Orotidine 5'-phosphate decarboxylase (235 aa).

Substrate contacts are provided by residues Asp12, Lys34, 61 to 70 (DLKFHDIPNT), Thr121, Arg182, Gln191, Gly211, and Arg212. The active-site Proton donor is the Lys63.

Belongs to the OMP decarboxylase family. Type 1 subfamily. As to quaternary structure, homodimer.

The enzyme catalyses orotidine 5'-phosphate + H(+) = UMP + CO2. It functions in the pathway pyrimidine metabolism; UMP biosynthesis via de novo pathway; UMP from orotate: step 2/2. Catalyzes the decarboxylation of orotidine 5'-monophosphate (OMP) to uridine 5'-monophosphate (UMP). The polypeptide is Orotidine 5'-phosphate decarboxylase (Marinomonas sp. (strain MWYL1)).